A 504-amino-acid polypeptide reads, in one-letter code: Histidine ammonia-lyase (504 aa).

The segment at residues 142 to 144 (ASG) is a cross-link (5-imidazolinone (Ala-Gly)). Residue Ser-143 is modified to 2,3-didehydroalanine (Ser).

Belongs to the PAL/histidase family. Contains an active site 4-methylidene-imidazol-5-one (MIO), which is formed autocatalytically by cyclization and dehydration of residues Ala-Ser-Gly.

The protein localises to the cytoplasm. It carries out the reaction L-histidine = trans-urocanate + NH4(+). The protein operates within amino-acid degradation; L-histidine degradation into L-glutamate; N-formimidoyl-L-glutamate from L-histidine: step 1/3. This is Histidine ammonia-lyase from Staphylococcus aureus (strain bovine RF122 / ET3-1).